The chain runs to 355 residues: Peptide chain release factor 1 (355 aa).

Glutamine 233 carries the post-translational modification N5-methylglutamine. Residues 280 to 293 (ERRKKEQERADSRR) show a composition bias toward basic and acidic residues. A disordered region spans residues 280–308 (ERRKKEQERADSRRGQVGSGDRSERIRTY).

The protein belongs to the prokaryotic/mitochondrial release factor family. Methylated by PrmC. Methylation increases the termination efficiency of RF1.

The protein localises to the cytoplasm. Its function is as follows. Peptide chain release factor 1 directs the termination of translation in response to the peptide chain termination codons UAG and UAA. The sequence is that of Peptide chain release factor 1 from Rickettsia felis (strain ATCC VR-1525 / URRWXCal2) (Rickettsia azadi).